Here is a 66-residue protein sequence, read N- to C-terminus: Large ribosomal subunit protein uL29 (66 aa).

The protein belongs to the universal ribosomal protein uL29 family.

In Thermosipho africanus (strain TCF52B), this protein is Large ribosomal subunit protein uL29.